Consider the following 298-residue polypeptide: DDRGK domain-containing protein 1 (298 aa).

Residues 1–2 (ME) are Lumenal-facing. The chain crosses the membrane as a helical span at residues 3–23 (EIFALIVSMILIVAVIPLFFW). Topologically, residues 24 to 298 (KRRRDARSRE…ISGMEEISVS (275 aa)) are cytoplasmic. Residues 31 to 155 (SREEVAEPPQ…EEEKARQAKE (125 aa)) form a disordered region. Residues 101–155 (KRQEREAQRQAEEATRESRNTKQDWYAEMRRKKDEEREAEELKLEEEEKARQAKE) show a composition bias toward basic and acidic residues.

This sequence belongs to the DDRGK1 family.

It localises to the endoplasmic reticulum membrane. In terms of biological role, substrate adapter for ufmylation, the covalent attachment of the ubiquitin-like modifier UFM1 to substrate proteins. This chain is DDRGK domain-containing protein 1, found in Arabidopsis thaliana (Mouse-ear cress).